The chain runs to 283 residues: Release factor glutamine methyltransferase (283 aa).

Residues 121–125, aspartate 144, and asparagine 188 each bind S-adenosyl-L-methionine; that span reads GTGSG. Position 188–191 (188–191) interacts with substrate; the sequence is NPPY.

The protein belongs to the protein N5-glutamine methyltransferase family. PrmC subfamily.

It catalyses the reaction L-glutaminyl-[peptide chain release factor] + S-adenosyl-L-methionine = N(5)-methyl-L-glutaminyl-[peptide chain release factor] + S-adenosyl-L-homocysteine + H(+). Its function is as follows. Methylates the class 1 translation termination release factors RF1/PrfA and RF2/PrfB on the glutamine residue of the universally conserved GGQ motif. The sequence is that of Release factor glutamine methyltransferase from Bacillus cereus (strain ATCC 14579 / DSM 31 / CCUG 7414 / JCM 2152 / NBRC 15305 / NCIMB 9373 / NCTC 2599 / NRRL B-3711).